Reading from the N-terminus, the 60-residue chain is Large ribosomal subunit protein bL32 (60 aa).

The tract at residues Met1–Leu22 is disordered. The segment covering His7–Tyr20 has biased composition (basic residues).

This sequence belongs to the bacterial ribosomal protein bL32 family.

The sequence is that of Large ribosomal subunit protein bL32 from Streptococcus pyogenes serotype M3 (strain ATCC BAA-595 / MGAS315).